The primary structure comprises 47 residues: PhoP/PhoQ regulator MgrB (47 aa).

Residues 6 to 26 (WVALVVVVLACLLLWAQVFNM) traverse the membrane as a helical segment.

The protein belongs to the MgrB family. May form homooligomers. Probably interacts with the periplasmic domain of PhoQ.

The protein localises to the cell inner membrane. In terms of biological role, phoP-regulated transcription is redox-sensitive, being activated when the periplasm becomes more reducing. MgrB acts between DsbA/DsbB and PhoP/PhoQ in this pathway. Represses PhoP/PhoQ signaling, possibly by binding to the periplasmic domain of PhoQ, altering its activity and that of downstream effector PhoP. The protein is PhoP/PhoQ regulator MgrB of Escherichia coli O1:K1 / APEC.